The following is a 325-amino-acid chain: tRNA(Ile)-lysidine synthase (325 aa).

Residue 34 to 39 (SGGADS) participates in ATP binding.

This sequence belongs to the tRNA(Ile)-lysidine synthase family.

The protein resides in the cytoplasm. The enzyme catalyses cytidine(34) in tRNA(Ile2) + L-lysine + ATP = lysidine(34) in tRNA(Ile2) + AMP + diphosphate + H(+). Ligates lysine onto the cytidine present at position 34 of the AUA codon-specific tRNA(Ile) that contains the anticodon CAU, in an ATP-dependent manner. Cytidine is converted to lysidine, thus changing the amino acid specificity of the tRNA from methionine to isoleucine. This Rhodococcus jostii (strain RHA1) protein is tRNA(Ile)-lysidine synthase.